Here is a 340-residue protein sequence, read N- to C-terminus: CMP-N-acetylneuraminate-beta-galactosamide-alpha-2,3-sialyltransferase 1 (340 aa).

Over 1–13 (MVTLRKRTLKVLT) the chain is Cytoplasmic. Residues 14-34 (FLVLFIFLTSFFLNYSHTMVA) traverse the membrane as a helical; Signal-anchor for type II membrane protein segment. The Lumenal portion of the chain corresponds to 35-340 (TTWFPKQMVL…INKIRIFKGR (306 aa)). Cystine bridges form between cysteine 59–cysteine 64, cysteine 61–cysteine 139, and cysteine 142–cysteine 281. An N-linked (GlcNAc...) asparagine glycan is attached at asparagine 79. Glutamine 105 serves as a coordination point for substrate. Asparagine 114 carries N-linked (GlcNAc...) asparagine glycosylation. Substrate is bound by residues asparagine 147 and asparagine 170. Asparagine 201 is a glycosylation site (N-linked (GlcNAc...) asparagine). Tyrosine 230, tyrosine 266, glycine 270, glycine 290, histidine 299, and histidine 316 together coordinate substrate. Asparagine 323 carries an N-linked (GlcNAc...) asparagine glycan.

The protein belongs to the glycosyltransferase 29 family. The soluble form derives from the membrane form by proteolytic processing. Expressed in several tissues. Highest expression in lung, liver, skeletal muscle, kidney, pancreas, spleen and placenta.

It localises to the golgi apparatus. It is found in the golgi stack membrane. The protein resides in the trans-Golgi network membrane. Its subcellular location is the secreted. The catalysed reaction is a beta-D-galactosyl-(1-&gt;3)-N-acetyl-alpha-D-galactosaminyl derivative + CMP-N-acetyl-beta-neuraminate = an N-acetyl-alpha-neuraminyl-(2-&gt;3)-beta-D-galactosyl-(1-&gt;3)-N-acetyl-alpha-D-galactosaminyl derivative + CMP + H(+). It carries out the reaction a ganglioside GM1 + CMP-N-acetyl-beta-neuraminate = a ganglioside GD1a + CMP + H(+). It catalyses the reaction a ganglioside GM1 (d18:1(4E)) + CMP-N-acetyl-beta-neuraminate = a ganglioside GD1a (d18:1(4E)) + CMP + H(+). The enzyme catalyses ganglioside GM1 (d18:1(4E)/18:0) + CMP-N-acetyl-beta-neuraminate = ganglioside GD1a (18:1(4E)/18:0) + CMP + H(+). The catalysed reaction is a ganglioside GA1 + CMP-N-acetyl-beta-neuraminate = a ganglioside GM1b + CMP + H(+). It carries out the reaction a ganglioside GA1 (d18:1(4E)) + CMP-N-acetyl-beta-neuraminate = a ganglioside GM1b (d18:1(4E)) + CMP + H(+). It catalyses the reaction a ganglioside GD1b + CMP-N-acetyl-beta-neuraminate = a ganglioside GT1b + CMP + H(+). The enzyme catalyses a 3-O-[beta-D-galactosyl-(1-&gt;3)-N-acetyl-alpha-D-galactosaminyl]-L-threonyl-[protein] + CMP-N-acetyl-beta-neuraminate = a 3-O-[N-acetyl-alpha-neuraminyl-(2-&gt;3)-beta-D-galactosyl-(1-&gt;3)-N-acetyl-alpha-D-galactosaminyl]-L-threonyl-[protein] + CMP + H(+). The catalysed reaction is a 3-O-[beta-D-galactosyl-(1-&gt;3)-N-acetyl-alpha-D-galactosaminyl]-L-seryl-[protein] + CMP-N-acetyl-beta-neuraminate = 3-O-[N-acetyl-alpha-neuraminyl-(2-&gt;3)-beta-D-galactosyl-(1-&gt;3)-N-acetyl-alpha-D-galactosaminyl]-L-seryl-[protein] + CMP + H(+). It participates in protein modification; protein glycosylation. The protein operates within glycolipid biosynthesis. In terms of biological role, a beta-galactoside alpha2-&gt;3 sialyltransferase involved in terminal sialylation of glycoproteins and glycolipids. Catalyzes the transfer of sialic acid (N-acetyl-neuraminic acid; Neu5Ac) from the nucleotide sugar donor CMP-Neu5Ac onto acceptor Galbeta-(1-&gt;3)-GalNAc-terminated glycoconjugates through an alpha2-3 linkage. Adds sialic acid to the core 1 O-glycan, Galbeta-(1-&gt;3)-GalNAc-O-Ser/Thr, which is a major structure of mucin-type O-glycans. As part of a homeostatic mechanism that regulates CD8-positive T cell numbers, sialylates core 1 O-glycans of T cell glycoproteins, SPN/CD43 and PTPRC/CD45. Prevents premature apoptosis of thymic CD8-positive T cells prior to peripheral emigration, whereas in the secondary lymphoid organs controls the survival of CD8-positive memory T cells generated following a successful immune response. Transfers sialic acid to asialofetuin, presumably onto Galbeta-(1-&gt;3)-GalNAc-O-Ser. Sialylates GM1a, GA1 and GD1b gangliosides to form GD1a, GM1b and GT1b, respectively. The sequence is that of CMP-N-acetylneuraminate-beta-galactosamide-alpha-2,3-sialyltransferase 1 from Homo sapiens (Human).